Here is a 178-residue protein sequence, read N- to C-terminus: ATP-dependent protease subunit HslV (178 aa).

The active site involves Thr7. Na(+) is bound by residues Gly162, Cys165, and Thr168.

The protein belongs to the peptidase T1B family. HslV subfamily. As to quaternary structure, a double ring-shaped homohexamer of HslV is capped on each side by a ring-shaped HslU homohexamer. The assembly of the HslU/HslV complex is dependent on binding of ATP.

It localises to the cytoplasm. The enzyme catalyses ATP-dependent cleavage of peptide bonds with broad specificity.. Allosterically activated by HslU binding. Protease subunit of a proteasome-like degradation complex believed to be a general protein degrading machinery. The sequence is that of ATP-dependent protease subunit HslV from Paraburkholderia phymatum (strain DSM 17167 / CIP 108236 / LMG 21445 / STM815) (Burkholderia phymatum).